The chain runs to 72 residues: MYLTLQEWNARQRRPRSLETVRRWVRECRIFPPPVKDGREYLFHESAVKVDLNRPVTGSLLKRIRNGKKAKS.

Excisionase and integrase are necessary for the excision of prophage from the host genome by site-specific recombination at the att site. In Enterobacteria phage 434 (Bacteriophage 434), this protein is Excisionase (xis).